Reading from the N-terminus, the 512-residue chain is Cobyric acid synthase (512 aa).

The GATase cobBQ-type domain occupies 251-451; sequence ALDIAVIRLP…IHGLFDSHHF (201 aa). Cysteine 332 functions as the Nucleophile in the catalytic mechanism. Histidine 443 is an active-site residue.

Belongs to the CobB/CobQ family. CobQ subfamily.

It functions in the pathway cofactor biosynthesis; adenosylcobalamin biosynthesis. Functionally, catalyzes amidations at positions B, D, E, and G on adenosylcobyrinic A,C-diamide. NH(2) groups are provided by glutamine, and one molecule of ATP is hydrogenolyzed for each amidation. This Yersinia enterocolitica serotype O:8 / biotype 1B (strain NCTC 13174 / 8081) protein is Cobyric acid synthase.